The sequence spans 461 residues: L-seryl-tRNA(Sec) selenium transferase (461 aa).

Residue lysine 294 is modified to N6-(pyridoxal phosphate)lysine.

The protein belongs to the SelA family. Pyridoxal 5'-phosphate is required as a cofactor.

It localises to the cytoplasm. The catalysed reaction is L-seryl-tRNA(Sec) + selenophosphate + H(+) = L-selenocysteinyl-tRNA(Sec) + phosphate. It functions in the pathway aminoacyl-tRNA biosynthesis; selenocysteinyl-tRNA(Sec) biosynthesis; selenocysteinyl-tRNA(Sec) from L-seryl-tRNA(Sec) (bacterial route): step 1/1. In terms of biological role, converts seryl-tRNA(Sec) to selenocysteinyl-tRNA(Sec) required for selenoprotein biosynthesis. The polypeptide is L-seryl-tRNA(Sec) selenium transferase (Haemophilus influenzae (strain PittEE)).